The chain runs to 154 residues: Large ribosomal subunit protein uL13 (154 aa).

This sequence belongs to the universal ribosomal protein uL13 family. As to quaternary structure, part of the 50S ribosomal subunit.

This protein is one of the early assembly proteins of the 50S ribosomal subunit, although it is not seen to bind rRNA by itself. It is important during the early stages of 50S assembly. The chain is Large ribosomal subunit protein uL13 from Rhodopseudomonas palustris (strain BisB5).